Reading from the N-terminus, the 227-residue chain is MTVGTLVASVLPATVFEDLAYAELYSDPPGLTPLPEEAPLIARSVAKRRNEFITVRHCARIALDQLGVPPAPILKGDKGEPCWPDGMVGSLTHCAGYRGAVVGRRDAVRSVGIDAEPHDVLPNGVLDAISLPAERADMPRTMPAALHWDRILFCAKEATYKAWFPLTKRWLGFEDAHITFETDSTGWTGRFVSRILIDGSTLSGPPLTTLRGRWSVERGLVLTAIVL.

CoA-binding positions include arginine 48, arginine 56, 75-78, 92-93, and aspartate 114; these read KGDK and TH. Residues aspartate 114, alanine 115, and glutamate 116 each contribute to the Mg(2+) site. CoA is bound by residues glutamate 157, lysine 161, and leucine 171.

This sequence belongs to the P-Pant transferase superfamily. Mg(2+) is required as a cofactor.

The enzyme catalyses apo-[ACP] + CoA = holo-[ACP] + adenosine 3',5'-bisphosphate + H(+). With respect to regulation, inhibited by the amidino-urea compound 1-[(2,6-diethylphenyl)-3-N-ethylcarbamimodoyl]urea (compound 8918). It acts by binding to the phosphopantetheine pocket in the active site. Inhibition by compound 8918 kills M.tuberculosis. Its function is as follows. Transfers the 4'-phosphopantetheine moiety from coenzyme A to a Ser of acyl-carrier-protein. Involved in post-translational modification of various type-I polyketide synthases required for the formation of both mycolic acids and lipid virulence factors. Acts on Pks13, Mas, PpsA, PpsB, PpsC and PpsD. Also acts on AcpM, the meromycolate extension acyl carrier protein. In addition, is involved in the activation of the acyl carrier protein MbtL and the nonribosomal peptides synthases MbtB and MbtE, which are involved in the biosynthesis of the siderophore mycobactin. In terms of biological role, required for the replication and survival of Mycobacterium during the acute and chronic phases of infection in mice. This chain is 4'-phosphopantetheinyl transferase PptT, found in Mycobacterium tuberculosis (strain ATCC 25618 / H37Rv).